Here is a 350-residue protein sequence, read N- to C-terminus: Nicotinate-nucleotide--dimethylbenzimidazole phosphoribosyltransferase (350 aa).

E316 functions as the Proton acceptor in the catalytic mechanism.

The protein belongs to the CobT family.

The catalysed reaction is 5,6-dimethylbenzimidazole + nicotinate beta-D-ribonucleotide = alpha-ribazole 5'-phosphate + nicotinate + H(+). It functions in the pathway nucleoside biosynthesis; alpha-ribazole biosynthesis; alpha-ribazole from 5,6-dimethylbenzimidazole: step 1/2. Its function is as follows. Catalyzes the synthesis of alpha-ribazole-5'-phosphate from nicotinate mononucleotide (NAMN) and 5,6-dimethylbenzimidazole (DMB). This chain is Nicotinate-nucleotide--dimethylbenzimidazole phosphoribosyltransferase, found in Pseudomonas savastanoi pv. phaseolicola (strain 1448A / Race 6) (Pseudomonas syringae pv. phaseolicola (strain 1448A / Race 6)).